Reading from the N-terminus, the 495-residue chain is Maintenance of mitochondrial morphology protein 1 (495 aa).

At 1-22 the chain is on the lumenal side; the sequence is MALQQHEPAPFAPQSSLSFTQG. A helical membrane pass occupies residues 23–43; the sequence is FLLGQLSVVLLIGAFIKFFIF. At 44-495 the chain is on the cytoplasmic side; sequence GEAPPPPSRG…PVGTPGIPDN (452 aa). Disordered regions lie at residues 63-94, 269-320, 382-428, and 440-495; these read YSSV…PSTS, ASTE…SPKS, WPRM…EPEG, and GLGA…IPDN. 2 stretches are compositionally biased toward polar residues: residues 65–74 and 82–94; these read SVYSPPQDSQ and STSN…PSTS. One can recognise an SMP-LTD domain in the interval 128–379; sequence QPESLDWFNV…EPRVQVVGLP (252 aa). The segment covering 271 to 289 has biased composition (pro residues); it reads TEPPEPLQTPAGSPAPPTS. Basic and acidic residues predominate over residues 418–428; it reads FSDDHGREPEG. Positions 458-469 are enriched in polar residues; sequence RSSSMTRQQSGG.

Belongs to the MMM1 family. As to quaternary structure, homodimer. Component of the ER-mitochondria encounter structure (ERMES) or MDM complex, composed of mmm1, mdm10, mdm12 and mdm34. An MMM1 homodimer associates with one molecule of mdm12 on each side in a pairwise head-to-tail manner, and the SMP-LTD domains of mmm1 and mdm12 generate a continuous hydrophobic tunnel for phospholipid trafficking.

The protein localises to the endoplasmic reticulum membrane. Functionally, component of the ERMES/MDM complex, which serves as a molecular tether to connect the endoplasmic reticulum (ER) and mitochondria. Components of this complex are involved in the control of mitochondrial shape and protein biogenesis, and function in nonvesicular lipid trafficking between the ER and mitochondria. The mdm12-mmm1 subcomplex functions in the major beta-barrel assembly pathway that is responsible for biogenesis of all outer membrane beta-barrel proteins, and acts in a late step after the SAM complex. The mdm10-mdm12-mmm1 subcomplex further acts in the TOM40-specific pathway after the action of the mdm12-mmm1 complex. Essential for establishing and maintaining the structure of mitochondria and maintenance of mtDNA nucleoids. The polypeptide is Maintenance of mitochondrial morphology protein 1 (Penicillium rubens (strain ATCC 28089 / DSM 1075 / NRRL 1951 / Wisconsin 54-1255) (Penicillium chrysogenum)).